The chain runs to 140 residues: D-ribose pyranase (140 aa).

Catalysis depends on H20, which acts as the Proton donor. Substrate is bound by residues D28, H99, and 121–123 (YSS).

It belongs to the RbsD / FucU family. RbsD subfamily. In terms of assembly, homodecamer.

Its subcellular location is the cytoplasm. It catalyses the reaction beta-D-ribopyranose = beta-D-ribofuranose. Its pathway is carbohydrate metabolism; D-ribose degradation; D-ribose 5-phosphate from beta-D-ribopyranose: step 1/2. Its function is as follows. Catalyzes the interconversion of beta-pyran and beta-furan forms of D-ribose. The polypeptide is D-ribose pyranase (Pseudothermotoga lettingae (strain ATCC BAA-301 / DSM 14385 / NBRC 107922 / TMO) (Thermotoga lettingae)).